Reading from the N-terminus, the 144-residue chain is Large ribosomal subunit protein uL16 (144 aa).

This sequence belongs to the universal ribosomal protein uL16 family. In terms of assembly, part of the 50S ribosomal subunit.

Functionally, binds 23S rRNA and is also seen to make contacts with the A and possibly P site tRNAs. The polypeptide is Large ribosomal subunit protein uL16 (Clostridium beijerinckii (strain ATCC 51743 / NCIMB 8052) (Clostridium acetobutylicum)).